The sequence spans 402 residues: Deoxyguanosinetriphosphate triphosphohydrolase-like protein (402 aa).

An HD domain is found at 73-217 (RLTHTIEVAQ…AAIADDIAYN (145 aa)).

The protein belongs to the dGTPase family. Type 2 subfamily.

This Brucella anthropi (strain ATCC 49188 / DSM 6882 / CCUG 24695 / JCM 21032 / LMG 3331 / NBRC 15819 / NCTC 12168 / Alc 37) (Ochrobactrum anthropi) protein is Deoxyguanosinetriphosphate triphosphohydrolase-like protein.